The sequence spans 335 residues: Histidinol-phosphate aminotransferase (335 aa).

Lys202 is modified (N6-(pyridoxal phosphate)lysine).

It belongs to the class-II pyridoxal-phosphate-dependent aminotransferase family. Histidinol-phosphate aminotransferase subfamily. In terms of assembly, homodimer. The cofactor is pyridoxal 5'-phosphate.

The enzyme catalyses L-histidinol phosphate + 2-oxoglutarate = 3-(imidazol-4-yl)-2-oxopropyl phosphate + L-glutamate. The protein operates within amino-acid biosynthesis; L-histidine biosynthesis; L-histidine from 5-phospho-alpha-D-ribose 1-diphosphate: step 7/9. This Thermotoga maritima (strain ATCC 43589 / DSM 3109 / JCM 10099 / NBRC 100826 / MSB8) protein is Histidinol-phosphate aminotransferase.